The chain runs to 511 residues: Lysine--tRNA ligase 2 (511 aa).

The segment covering 1 to 11 (MTMEINNTDPS) has biased composition (polar residues). Residues 1–21 (MTMEINNTDPSENMPLPDDVD) are disordered. Glu421 and Glu428 together coordinate Mg(2+).

The protein belongs to the class-II aminoacyl-tRNA synthetase family. Homodimer. The cofactor is Mg(2+).

Its subcellular location is the cytoplasm. The enzyme catalyses tRNA(Lys) + L-lysine + ATP = L-lysyl-tRNA(Lys) + AMP + diphosphate. This chain is Lysine--tRNA ligase 2, found in Methanosarcina acetivorans (strain ATCC 35395 / DSM 2834 / JCM 12185 / C2A).